We begin with the raw amino-acid sequence, 276 residues long: Dermonecrotic toxin LdSicTox-alphaIB2 (276 aa).

His5 is an active-site residue. The Mg(2+) site is built by Glu25 and Asp27. His41 serves as the catalytic Nucleophile. Disulfide bonds link Cys45/Cys51 and Cys47/Cys190. Asp85 serves as a coordination point for Mg(2+). Asn253 carries N-linked (GlcNAc...) asparagine glycosylation.

This sequence belongs to the arthropod phospholipase D family. Class II subfamily. The cofactor is Mg(2+). In terms of tissue distribution, expressed by the venom gland.

It localises to the secreted. The enzyme catalyses an N-(acyl)-sphingosylphosphocholine = an N-(acyl)-sphingosyl-1,3-cyclic phosphate + choline. The catalysed reaction is an N-(acyl)-sphingosylphosphoethanolamine = an N-(acyl)-sphingosyl-1,3-cyclic phosphate + ethanolamine. It carries out the reaction a 1-acyl-sn-glycero-3-phosphocholine = a 1-acyl-sn-glycero-2,3-cyclic phosphate + choline. It catalyses the reaction a 1-acyl-sn-glycero-3-phosphoethanolamine = a 1-acyl-sn-glycero-2,3-cyclic phosphate + ethanolamine. Dermonecrotic toxins cleave the phosphodiester linkage between the phosphate and headgroup of certain phospholipids (sphingolipid and lysolipid substrates), forming an alcohol (often choline) and a cyclic phosphate. This toxin acts on sphingomyelin (SM). It may also act on ceramide phosphoethanolamine (CPE), lysophosphatidylcholine (LPC) and lysophosphatidylethanolamine (LPE), but not on lysophosphatidylserine (LPS), and lysophosphatidylglycerol (LPG). It acts by transphosphatidylation, releasing exclusively cyclic phosphate products as second products. Induces dermonecrosis, hemolysis, increased vascular permeability, edema, inflammatory response, and platelet aggregation. The protein is Dermonecrotic toxin LdSicTox-alphaIB2 of Loxosceles deserta (Desert recluse spider).